The chain runs to 361 residues: NudC domain-containing protein 3 (361 aa).

The span at 87–97 shows a compositional bias: basic and acidic residues; sequence KIRRKEEEEAK. Disordered stretches follow at residues 87 to 106 and 124 to 158; these read KIRRKEEEEAKTVSAAAAEK and LDGHQEVEKVQPPGPVKEMAHGSQEAEAPGAVAGA. S146 bears the Phosphoserine mark. The segment covering 148–158 has biased composition (low complexity); it reads EAEAPGAVAGA. The region spanning 185–277 is the CS domain; it reads AVRENYTWSQ…VGEYWWNAIL (93 aa). S340 and S355 each carry phosphoserine.

This chain is NudC domain-containing protein 3 (NUDCD3), found in Homo sapiens (Human).